The following is a 270-amino-acid chain: Aliphatic sulfonates import ATP-binding protein SsuB 3 (270 aa).

Residues 17–238 form the ABC transporter domain; the sequence is LAVRKLKKAF…VRGSHRLAAL (222 aa). 49–56 contributes to the ATP binding site; the sequence is GRSGCGKS.

It belongs to the ABC transporter superfamily. Aliphatic sulfonates importer (TC 3.A.1.17.2) family. In terms of assembly, the complex is composed of two ATP-binding proteins (SsuB), two transmembrane proteins (SsuC) and a solute-binding protein (SsuA).

Its subcellular location is the cell inner membrane. It catalyses the reaction ATP + H2O + aliphatic sulfonate-[sulfonate-binding protein]Side 1 = ADP + phosphate + aliphatic sulfonateSide 2 + [sulfonate-binding protein]Side 1.. Part of the ABC transporter complex SsuABC involved in aliphatic sulfonates import. Responsible for energy coupling to the transport system. This Pseudomonas syringae pv. syringae (strain B728a) protein is Aliphatic sulfonates import ATP-binding protein SsuB 3.